The following is a 156-amino-acid chain: C-type lectin lectoxin-Phi2 (156 aa).

Residues 1–23 (MGRFIFVSLGLLVLAFSLSGIGA) form the signal peptide. Cystine bridges form between Cys-27-Cys-38, Cys-55-Cys-154, and Cys-129-Cys-146. Residues 34–155 (HNVSCYKLIN…CNRRHRFLCK (122 aa)) enclose the C-type lectin domain. N-linked (GlcNAc...) asparagine glycosylation is found at Asn-35 and Asn-109. The Mannose-binding signature appears at 119 to 121 (EPN). Residues Glu-127, Asn-142, and Asp-143 each coordinate Ca(2+).

The protein belongs to the true venom lectin family. As to expression, expressed by the venom gland.

It localises to the secreted. Mannose-binding lectin which recognizes specific carbohydrate structures and agglutinates a variety of animal cells by binding to cell-surface glycoproteins and glycolipids. May be a calcium-dependent lectin. This is C-type lectin lectoxin-Phi2 from Philodryas olfersii (Green snake).